Here is a 332-residue protein sequence, read N- to C-terminus: HPr kinase/phosphorylase (332 aa).

Active-site residues include H153 and K174. G168–S175 is an ATP binding site. S175 provides a ligand contact to Mg(2+). D192 (proton acceptor; for phosphorylation activity. Proton donor; for dephosphorylation activity) is an active-site residue. Residues M217–D226 are important for the catalytic mechanism of both phosphorylation and dephosphorylation. E218 provides a ligand contact to Mg(2+). Residue R259 is part of the active site. An important for the catalytic mechanism of dephosphorylation region spans residues P280 to K285.

It belongs to the HPrK/P family. As to quaternary structure, homohexamer. Requires Mg(2+) as cofactor.

It catalyses the reaction [HPr protein]-L-serine + ATP = [HPr protein]-O-phospho-L-serine + ADP + H(+). The enzyme catalyses [HPr protein]-O-phospho-L-serine + phosphate + H(+) = [HPr protein]-L-serine + diphosphate. In terms of biological role, catalyzes the ATP- as well as the pyrophosphate-dependent phosphorylation of a specific serine residue in HPr, a phosphocarrier protein of the phosphoenolpyruvate-dependent sugar phosphotransferase system (PTS). HprK/P also catalyzes the pyrophosphate-producing, inorganic phosphate-dependent dephosphorylation (phosphorolysis) of seryl-phosphorylated HPr (P-Ser-HPr). The sequence is that of HPr kinase/phosphorylase from Chlorobium luteolum (strain DSM 273 / BCRC 81028 / 2530) (Pelodictyon luteolum).